The following is a 1567-amino-acid chain: Myosin-2A (1567 aa).

The Myosin N-terminal SH3-like domain maps to 4 to 57; sequence EVGTRCWYPSKEQGWIGAEVTKNDLKDGTYFMELTLEDNEVVNVETKDLTNEKD. The 717-residue stretch at 70–786 folds into the Myosin motor domain; the sequence is ESTEDLTTLS…MLAYFEKLRS (717 aa). 164-171 provides a ligand contact to ATP; the sequence is GESGAGKT. Positions 446–526 are actin-binding; that stretch reads FIGVLDIYGF…LGILSLLDEE (81 aa). The segment at 619 to 640 is disordered; it reads EEAKKNAASQDQKQLKKPTPIR. IQ domains lie at 789–818, 812–836, 837–859, 860–884, 885–907, and 908–937; these read MNSAIVLIQKHIRSKYYRKQYMLMKASLSL, MKASLSLLGAYSKGTVIRQRVEYEL, EQHAATLIQTMYRGYSKRSYISG, VISSIVKLQSRIREELEQREMQSKY, ESNAAISIQSRIRAFVPRKAYES, and KRRDTIVVQSLIRRRIAQRDFKKLKADAKS. Residues 947–1091 are a coiled coil; the sequence is KLENKVIQLT…LAHLQTSIAL (145 aa). A non alpha-helical, tail domain region spans residues 1092–1567; that stretch reads GTVTTNTNIV…VAQQVTVPDA (476 aa). In terms of domain architecture, Dilute spans 1230-1505; that stretch reads AQVLTTIQKV…LKYVADIVKK (276 aa).

The protein belongs to the TRAFAC class myosin-kinesin ATPase superfamily. Myosin family. As to quaternary structure, homodimer. Interacts with calmodulin (CMD1) and the myosin light chain MLC1 through its IQ repeats.

In terms of biological role, myosin heavy chain that is required for the cell cycle-regulated transport of various organelles and proteins for their segregation. Functions by binding with its tail domain to receptor proteins on organelles and exerting force with its N-terminal motor domain against actin filaments, thereby transporting its cargo along polarized actin cables. This is Myosin-2A (MYO2A) from Naumovozyma castellii (Yeast).